Here is a 101-residue protein sequence, read N- to C-terminus: NADH-quinone oxidoreductase subunit K (101 aa).

The next 3 helical transmembrane spans lie at 4 to 24 (LPHY…GIFV), 30 to 50 (IVIL…LVAF), and 61 to 81 (IFAM…LAIL).

The protein belongs to the complex I subunit 4L family. NDH-1 is composed of 14 different subunits. Subunits NuoA, H, J, K, L, M, N constitute the membrane sector of the complex.

It is found in the cell inner membrane. The enzyme catalyses a quinone + NADH + 5 H(+)(in) = a quinol + NAD(+) + 4 H(+)(out). Its function is as follows. NDH-1 shuttles electrons from NADH, via FMN and iron-sulfur (Fe-S) centers, to quinones in the respiratory chain. The immediate electron acceptor for the enzyme in this species is believed to be ubiquinone. Couples the redox reaction to proton translocation (for every two electrons transferred, four hydrogen ions are translocated across the cytoplasmic membrane), and thus conserves the redox energy in a proton gradient. This chain is NADH-quinone oxidoreductase subunit K, found in Caulobacter vibrioides (strain ATCC 19089 / CIP 103742 / CB 15) (Caulobacter crescentus).